Consider the following 545-residue polypeptide: ATP synthase subunit alpha (545 aa).

172–179 (GDRKTGKT) lines the ATP pocket. Residues 511–545 (FQTTDGTPVINEPEARPLGDDEVTKSQITVSRKTQ) are disordered. Over residues 523–534 (PEARPLGDDEVT) the composition is skewed to basic and acidic residues. The segment covering 535–545 (KSQITVSRKTQ) has biased composition (polar residues).

Belongs to the ATPase alpha/beta chains family. F-type ATPases have 2 components, CF(1) - the catalytic core - and CF(0) - the membrane proton channel. CF(1) has five subunits: alpha(3), beta(3), gamma(1), delta(1), epsilon(1). CF(0) has three main subunits: a(1), b(2) and c(9-12). The alpha and beta chains form an alternating ring which encloses part of the gamma chain. CF(1) is attached to CF(0) by a central stalk formed by the gamma and epsilon chains, while a peripheral stalk is formed by the delta and b chains.

The protein resides in the cell membrane. It catalyses the reaction ATP + H2O + 4 H(+)(in) = ADP + phosphate + 5 H(+)(out). Its function is as follows. Produces ATP from ADP in the presence of a proton gradient across the membrane. The alpha chain is a regulatory subunit. This chain is ATP synthase subunit alpha, found in Corynebacterium jeikeium (strain K411).